The following is a 508-amino-acid chain: UDP-N-acetylmuramoylalanine--D-glutamate ligase (508 aa).

Residue 138–144 (GTNGKTT) participates in ATP binding.

It belongs to the MurCDEF family.

It localises to the cytoplasm. It carries out the reaction UDP-N-acetyl-alpha-D-muramoyl-L-alanine + D-glutamate + ATP = UDP-N-acetyl-alpha-D-muramoyl-L-alanyl-D-glutamate + ADP + phosphate + H(+). It functions in the pathway cell wall biogenesis; peptidoglycan biosynthesis. Functionally, cell wall formation. Catalyzes the addition of glutamate to the nucleotide precursor UDP-N-acetylmuramoyl-L-alanine (UMA). In Bordetella avium (strain 197N), this protein is UDP-N-acetylmuramoylalanine--D-glutamate ligase.